Reading from the N-terminus, the 1196-residue chain is Phosphatidylinositol-3,5-bisphosphate 3-phosphatase MTMR3 (1196 aa).

Serine 8 bears the Phosphoserine mark. In terms of domain architecture, Myotubularin phosphatase spans 155–576 (EHVTSRFKNE…RNLMLWSAVY (422 aa)). A 1,2-diacyl-sn-glycero-3-phospho-(1D-myo-inositol-3,5-bisphosphate)-binding residues include asparagine 326, asparagine 351, and isoleucine 352. Residues asparagine 326, asparagine 351, and isoleucine 352 each coordinate a 1,2-diacyl-sn-glycero-3-phospho-(1D-myo-inositol-3-phosphate). The active-site Phosphocysteine intermediate is cysteine 413. 8 residues coordinate a 1,2-diacyl-sn-glycero-3-phospho-(1D-myo-inositol-3,5-bisphosphate): serine 414, aspartate 415, glycine 416, tryptophan 417, aspartate 418, arginine 419, lysine 455, and arginine 459. Residues serine 414, aspartate 415, glycine 416, tryptophan 417, aspartate 418, and arginine 419 each coordinate a 1,2-diacyl-sn-glycero-3-phospho-(1D-myo-inositol-3-phosphate). Arginine 459 contributes to the a 1,2-diacyl-sn-glycero-3-phospho-(1D-myo-inositol-3-phosphate) binding site. The interval 587–612 (DDSCAPYPVPGTSPDEPPLSRLPKTR) is disordered. Residues 593–603 (YPVPGTSPDEP) show a composition bias toward pro residues. Serine 613, serine 633, serine 647, and serine 651 each carry phosphoserine. Disordered stretches follow at residues 697–719 (TKEESGVEEPTHRGHTEVPEVKE) and 855–900 (ESGP…HRTS). Serine 907 is modified (phosphoserine). The segment covering 993–1008 (NSHSGRPSTTSSPDQP) has biased composition (polar residues). Positions 993–1019 (NSHSGRPSTTSSPDQPSRSHLDDDGMP) are disordered. Residues 1027 to 1060 (QRLRQIESGHQQEVETLKKQVQELKSRLESQYLT) adopt a coiled-coil conformation. The residue at position 1062 (serine 1062) is a Phosphoserine. Residues 1117–1177 (DHLAAHCYAC…VCKSCYSSLH (61 aa)) form an FYVE-type zinc finger. Zn(2+) is bound by residues cysteine 1123, cysteine 1126, cysteine 1139, cysteine 1142, cysteine 1147, cysteine 1150, cysteine 1169, and cysteine 1172.

It belongs to the protein-tyrosine phosphatase family. Non-receptor class myotubularin subfamily. In terms of assembly, forms heterodimers with MTMR4 that recruit both CEP55 and PLK1; occurs during early mitosis, regulates the phosphorylation of CEP55 by PLK1 and its recruitment to the midbody where it mediates cell abscission.

The protein localises to the cytoplasm. It localises to the cytosol. It is found in the membrane. It carries out the reaction a 1,2-diacyl-sn-glycero-3-phospho-(1D-myo-inositol-3,5-bisphosphate) + H2O = a 1,2-diacyl-sn-glycero-3-phospho-(1D-myo-inositol-5-phosphate) + phosphate. The enzyme catalyses a 1,2-diacyl-sn-glycero-3-phospho-(1D-myo-inositol-3-phosphate) + H2O = a 1,2-diacyl-sn-glycero-3-phospho-(1D-myo-inositol) + phosphate. The catalysed reaction is 1,2-dihexadecanoyl-sn-glycero-3-phospho-(1D-myo-inositol-3-phosphate) + H2O = 1,2-dihexadecanoyl-sn-glycero-3-phospho-(1D-myo-inositol) + phosphate. It catalyses the reaction 1,2-dioctanoyl-sn-glycero-3-phospho-(1-D-myo-inositol-3-phosphate) + H2O = 1,2-dioctanoyl-sn-glycero-3-phospho-(1D-myo-inositol) + phosphate. It carries out the reaction 1,2-dihexadecanoyl-sn-glycero-3-phospho-(1D-myo-inositol-3,5-phosphate) + H2O = 1,2-dihexadecanoyl-sn-glycero-3-phospho-(1D-myo-inositol-5-phosphate) + phosphate. Its function is as follows. Lipid phosphatase that specifically dephosphorylates the D-3 position of phosphatidylinositol 3-phosphate and phosphatidylinositol 3,5-bisphosphate, generating phosphatidylinositol and phosphatidylinositol 5-phosphate. Decreases the levels of phosphatidylinositol 3-phosphate, a phospholipid found in cell membranes where it acts as key regulator of both cell signaling and intracellular membrane traffic. Could also have a molecular sequestering/adapter activity and regulate biological processes independently of its phosphatase activity. It includes the regulation of midbody abscission during mitotic cytokinesis. The sequence is that of Phosphatidylinositol-3,5-bisphosphate 3-phosphatase MTMR3 from Mus musculus (Mouse).